A 1342-amino-acid polypeptide reads, in one-letter code: DNA-directed RNA polymerase subunit beta (1342 aa).

It belongs to the RNA polymerase beta chain family. In terms of assembly, the RNAP catalytic core consists of 2 alpha, 1 beta, 1 beta' and 1 omega subunit. When a sigma factor is associated with the core the holoenzyme is formed, which can initiate transcription.

The enzyme catalyses RNA(n) + a ribonucleoside 5'-triphosphate = RNA(n+1) + diphosphate. Functionally, DNA-dependent RNA polymerase catalyzes the transcription of DNA into RNA using the four ribonucleoside triphosphates as substrates. This chain is DNA-directed RNA polymerase subunit beta, found in Shewanella amazonensis (strain ATCC BAA-1098 / SB2B).